A 953-amino-acid polypeptide reads, in one-letter code: MSKKRLHEIAKEIGKSSKEVVEHAKYLGLDVKSHASSVEEADAKKIISSFSKASKPDVTASQTVKPKEVAQPSVTVVKETGSEHAEKTQVSKPKSRNFKAEREARAKEQAARKQANGSSHRSQERRGGYRQPNNHQTNEQGDKRITHRSQGDTNDKRIERKASNVSPRHDNHQLVGDRNRSFAKENHKNGRFTNQKKQGRQEPQSKSPKIDFKARAAALKAEQNAEYSRQSETRFRAQQEAKRLAELARQEAKEAALKAQAEEMSHREAALKSIEEAETKLKSSNISAKSTADNRRKKQARPEKNRELTHHSQEGQKKNKKSWNSQNQVRNQKNSNWNKNKKTKKGKNVKNTNTAPKPVTERKFHELPKEFEYTEGMTVAEIAKRIKREPAEIVKKLFMMGVMATQNQSLDGDTIELLMVDYGIEAKAKVEVDDADIERFFEDENYLNPENIVERAPVVTIMGHVDHGKTTLLDTLRNSRVATGEAGGITQHIGAYQIEEAGKKITFLDTPGHAAFTSMRARGASVTDITILIVAADDGVMPQTIEAINHSKAAGVPIIVAINKIDKPGANPERVIAELAEYGIISTAWGGDSEFVEISAKFNKNIDELLETVLLVAEVEELKADPTVRAIGTVIEARLDKGKGAIATLLVQQGTLHVQDPIVVGNTFGRVRAMVNDLGRRVKSAEPSTPVSITGLNETPMAGDHFAVYADEKAARAAGEERSKRALLKQRQNTQRVSLDNLFDTLKAGEIKTVNVIIKADVQGSVEALAASLVKIDVEGVRVNVVHSAVGAINESDVTLAEASNAVIIGFNVRPTPQARQQADTDDVEIRLHSIIYKVIEEVEEAMKGKLDPVYQEKILGEAIIRETFKVSKVGTIGGFMVINGKVTRDSSVRVIRDSVVIFDGKLASLKHYKDDVKEVGNAQEGGLMIENFNDLKVDDTIEAYIMEEIVRK.

Disordered stretches follow at residues serine 48 to alanine 248 and threonine 279 to lysine 363. 3 stretches are compositionally biased toward basic and acidic residues: residues threonine 80–glutamine 89, phenylalanine 98–alanine 111, and glutamine 140–lysine 188. Polar residues predominate over residues arginine 191–serine 207. Residues arginine 229 to alanine 248 show a composition bias toward basic and acidic residues. Polar residues predominate over residues lysine 282–threonine 291. A compositionally biased stretch (basic and acidic residues) spans alanine 300–lysine 317. Positions serine 322–asparagine 338 are enriched in low complexity. Basic residues predominate over residues lysine 339 to asparagine 348. Residues glutamate 454–lysine 623 enclose the tr-type G domain. The segment at glycine 463–threonine 470 is G1. Glycine 463 to threonine 470 lines the GTP pocket. The G2 stretch occupies residues glycine 488–histidine 492. The tract at residues aspartate 509–glycine 512 is G3. Residues aspartate 509 to histidine 513 and asparagine 563 to aspartate 566 contribute to the GTP site. The G4 stretch occupies residues asparagine 563 to aspartate 566. The G5 stretch occupies residues serine 599–lysine 601.

This sequence belongs to the TRAFAC class translation factor GTPase superfamily. Classic translation factor GTPase family. IF-2 subfamily.

It is found in the cytoplasm. Functionally, one of the essential components for the initiation of protein synthesis. Protects formylmethionyl-tRNA from spontaneous hydrolysis and promotes its binding to the 30S ribosomal subunits. Also involved in the hydrolysis of GTP during the formation of the 70S ribosomal complex. This chain is Translation initiation factor IF-2, found in Streptococcus pyogenes serotype M18 (strain MGAS8232).